A 130-amino-acid chain; its full sequence is Small ribosomal subunit protein uS11 (130 aa).

Belongs to the universal ribosomal protein uS11 family. As to quaternary structure, part of the 30S ribosomal subunit. Interacts with proteins S7 and S18. Binds to IF-3.

Located on the platform of the 30S subunit, it bridges several disparate RNA helices of the 16S rRNA. Forms part of the Shine-Dalgarno cleft in the 70S ribosome. This Synechococcus sp. (strain CC9902) protein is Small ribosomal subunit protein uS11.